Here is a 264-residue protein sequence, read N- to C-terminus: Acyl-[acyl-carrier-protein]--UDP-N-acetylglucosamine O-acyltransferase (264 aa).

The protein belongs to the transferase hexapeptide repeat family. LpxA subfamily. As to quaternary structure, homotrimer.

It localises to the cytoplasm. It carries out the reaction a (3R)-hydroxyacyl-[ACP] + UDP-N-acetyl-alpha-D-glucosamine = a UDP-3-O-[(3R)-3-hydroxyacyl]-N-acetyl-alpha-D-glucosamine + holo-[ACP]. It functions in the pathway glycolipid biosynthesis; lipid IV(A) biosynthesis; lipid IV(A) from (3R)-3-hydroxytetradecanoyl-[acyl-carrier-protein] and UDP-N-acetyl-alpha-D-glucosamine: step 1/6. Functionally, involved in the biosynthesis of lipid A, a phosphorylated glycolipid that anchors the lipopolysaccharide to the outer membrane of the cell. The protein is Acyl-[acyl-carrier-protein]--UDP-N-acetylglucosamine O-acyltransferase of Rickettsia rickettsii.